Here is a 1536-residue protein sequence, read N- to C-terminus: Ferredoxin-dependent glutamate synthase (1536 aa).

Catalysis depends on Cys27, which acts as the For GATase activity. The region spanning 27-427 (CGVGFIANLN…PGQMLCVDLS (401 aa)) is the Glutamine amidotransferase type-2 domain. 1105 to 1162 (LAEVHTTLVENSLREKVILRVDGGLRTGKDIIIAALMGAEEFGFGTVAMIATGCVMAR) is an FMN binding site. The [3Fe-4S] cluster site is built by Cys1158, Cys1164, and Cys1169.

Belongs to the glutamate synthase family. As to quaternary structure, monomer. [3Fe-4S] cluster serves as cofactor. Requires FAD as cofactor. It depends on FMN as a cofactor.

Its subcellular location is the plastid. It localises to the chloroplast stroma. The catalysed reaction is 2 oxidized [2Fe-2S]-[ferredoxin] + 2 L-glutamate = L-glutamine + 2 reduced [2Fe-2S]-[ferredoxin] + 2-oxoglutarate + 2 H(+). It participates in amino-acid biosynthesis; L-glutamate biosynthesis via GLT pathway; L-glutamate from 2-oxoglutarate and L-glutamine (ferredoxin route): step 1/1. It functions in the pathway energy metabolism; nitrogen metabolism. This is Ferredoxin-dependent glutamate synthase (gltB) from Antithamnion sp. (Red alga).